Here is a 306-residue protein sequence, read N- to C-terminus: Ribonuclease Z (306 aa).

H63, H65, D67, H68, H141, D208, and H266 together coordinate Zn(2+). The active-site Proton acceptor is the D67.

Belongs to the RNase Z family. Homodimer. The cofactor is Zn(2+).

It carries out the reaction Endonucleolytic cleavage of RNA, removing extra 3' nucleotides from tRNA precursor, generating 3' termini of tRNAs. A 3'-hydroxy group is left at the tRNA terminus and a 5'-phosphoryl group is left at the trailer molecule.. Its function is as follows. Zinc phosphodiesterase, which displays some tRNA 3'-processing endonuclease activity. Probably involved in tRNA maturation, by removing a 3'-trailer from precursor tRNA. This is Ribonuclease Z from Chlamydia caviae (strain ATCC VR-813 / DSM 19441 / 03DC25 / GPIC) (Chlamydophila caviae).